The primary structure comprises 210 residues: Small ribosomal subunit protein uS7 (210 aa).

Acidic residues predominate over residues 1-22 (MSDEQPAEDETEEAAAESEDTQ). The interval 1-23 (MSDEQPAEDETEEAAAESEDTQE) is disordered.

The protein belongs to the universal ribosomal protein uS7 family. In terms of assembly, part of the 30S ribosomal subunit. Contacts proteins S9 and S11.

One of the primary rRNA binding proteins, it binds directly to 16S rRNA where it nucleates assembly of the head domain of the 30S subunit. Is located at the subunit interface close to the decoding center. The chain is Small ribosomal subunit protein uS7 from Halobacterium salinarum (strain ATCC 29341 / DSM 671 / R1).